A 148-amino-acid chain; its full sequence is Large ribosomal subunit protein bL9 (148 aa).

Belongs to the bacterial ribosomal protein bL9 family.

In terms of biological role, binds to the 23S rRNA. This Thermobifida fusca (strain YX) protein is Large ribosomal subunit protein bL9.